The primary structure comprises 324 residues: MAKQIKKIAVLTSGGDAPGMNAAIRGVVRAALNEGLEVYGVQDGYYGLYTDRVIPLDRRSVSETINRGGTFLGSARFPQFKDPDVRKKSVETLKKYDIDALVVIGGDGSYMGAKLITEEFGYPCIGIPGTIDNDIVGTDYTIGYQTALETAVEAIDRLRDTSTSHQRISIVEIMGRHCGDLTISAALASGCEYIIVPEKGLDKESLMRNIEDGFNKGKRHAIIAITELMTDVQALAKEIEDRFGHETRATVLGHIQRGGAPCPFDRILASRMGVYAVDLLLQGHGGRCIGIKNENLVHHDIIDAINNMRRPFKEELFEAARKLF.

Glycine 15 provides a ligand contact to ATP. 25–29 is a binding site for ADP; it reads RGVVR. Residues 76-77 and 106-109 each bind ATP; these read RF and GDGS. Residue aspartate 107 participates in Mg(2+) binding. Position 130–132 (130–132) interacts with substrate; the sequence is TID. Aspartate 132 acts as the Proton acceptor in catalysis. Arginine 159 provides a ligand contact to ADP. Substrate-binding positions include arginine 167 and 174-176; that span reads MGR. ADP is bound by residues 190–192, lysine 216, and 218–220; these read GCE and KRH. Substrate contacts are provided by residues glutamate 227, arginine 248, and 254–257; that span reads HIQR.

This sequence belongs to the phosphofructokinase type A (PFKA) family. ATP-dependent PFK group I subfamily. Prokaryotic clade 'B1' sub-subfamily. Homotetramer. It depends on Mg(2+) as a cofactor.

The protein resides in the cytoplasm. The enzyme catalyses beta-D-fructose 6-phosphate + ATP = beta-D-fructose 1,6-bisphosphate + ADP + H(+). It participates in carbohydrate degradation; glycolysis; D-glyceraldehyde 3-phosphate and glycerone phosphate from D-glucose: step 3/4. Its activity is regulated as follows. Allosterically activated by ADP and other diphosphonucleosides, and allosterically inhibited by phosphoenolpyruvate. In terms of biological role, catalyzes the phosphorylation of D-fructose 6-phosphate to fructose 1,6-bisphosphate by ATP, the first committing step of glycolysis. This Actinobacillus pleuropneumoniae serotype 5b (strain L20) protein is ATP-dependent 6-phosphofructokinase.